A 235-amino-acid polypeptide reads, in one-letter code: tRNA (cytidine-2'-O-)-methyltransferase TrmJ (235 aa).

S-adenosyl-L-methionine-binding positions include 77–79 (TSS), Gly-111, Ile-131, and 138–140 (PVL).

This sequence belongs to the class IV-like SAM-binding methyltransferase superfamily. RNA methyltransferase TrmH family. Homodimer.

Its subcellular location is the cytoplasm. The catalysed reaction is cytidine(32) in tRNA + S-adenosyl-L-methionine = 2'-O-methylcytidine(32) in tRNA + S-adenosyl-L-homocysteine + H(+). Its function is as follows. Catalyzes the formation of 2'O-methylated cytidine (Cm32) at position 32 in tRNA. Is specific for cytidine. The sequence is that of tRNA (cytidine-2'-O-)-methyltransferase TrmJ from Sulfolobus acidocaldarius (strain ATCC 33909 / DSM 639 / JCM 8929 / NBRC 15157 / NCIMB 11770).